A 365-amino-acid chain; its full sequence is Phosphoserine aminotransferase (365 aa).

Arg-42 provides a ligand contact to L-glutamate. Pyridoxal 5'-phosphate is bound by residues 76 to 77 (AR), Trp-103, Thr-154, Asp-175, and Gln-198. Lys-199 bears the N6-(pyridoxal phosphate)lysine mark. A pyridoxal 5'-phosphate-binding site is contributed by 242 to 243 (NT).

Belongs to the class-V pyridoxal-phosphate-dependent aminotransferase family. SerC subfamily. In terms of assembly, homodimer. The cofactor is pyridoxal 5'-phosphate.

The protein localises to the cytoplasm. The enzyme catalyses O-phospho-L-serine + 2-oxoglutarate = 3-phosphooxypyruvate + L-glutamate. The catalysed reaction is 4-(phosphooxy)-L-threonine + 2-oxoglutarate = (R)-3-hydroxy-2-oxo-4-phosphooxybutanoate + L-glutamate. It participates in amino-acid biosynthesis; L-serine biosynthesis; L-serine from 3-phospho-D-glycerate: step 2/3. Its pathway is cofactor biosynthesis; pyridoxine 5'-phosphate biosynthesis; pyridoxine 5'-phosphate from D-erythrose 4-phosphate: step 3/5. Catalyzes the reversible conversion of 3-phosphohydroxypyruvate to phosphoserine and of 3-hydroxy-2-oxo-4-phosphonooxybutanoate to phosphohydroxythreonine. The chain is Phosphoserine aminotransferase from Blochmanniella floridana.